The chain runs to 169 residues: MPCRKESFLLLEQSVTVGSGEVDTLVARIGEALQLNAQRTPTSCSMAYGALKPVSRAGPSCSCVRGRSTPYPVCTPRGAARHAQHHHHHSPRQQGTGGNKRLCGRGWGRCNCRKHAGTEEEDDPHELLQELLLSGNLIKEAVRRLHMAGESPDPPGSRRVSECTETTVQ.

A disordered region spans residues 75–100 (TPRGAARHAQHHHHHSPRQQGTGGNK). A compositionally biased stretch (basic residues) spans 79-91 (AARHAQHHHHHSP). An involved in GSK-3 binding region spans residues 122 to 145 (DDPHELLQELLLSGNLIKEAVRRL). Residues 147-169 (MAGESPDPPGSRRVSECTETTVQ) are disordered.

The protein belongs to the GSK-3-binding protein family.

Its function is as follows. Binds GSK-3 and prevents GSK-3-dependent phosphorylation. Regulates the stability of beta-catenin in embryos. Maternal GBP is required for dorsal-ventral axis formation. The chain is GSK-3-binding protein (gbp) from Xenopus laevis (African clawed frog).